Consider the following 82-residue polypeptide: Antitoxin MazE2 (82 aa).

As to quaternary structure, probably forms a complex with cognate toxin MazF2.

Its function is as follows. Antitoxin component of a type II toxin-antitoxin (TA) system. Labile antitoxin that binds to cognate MazF2 toxin and counteracts its endoribonuclease activity. This chain is Antitoxin MazE2 (mazE2), found in Mycobacterium bovis (strain ATCC BAA-935 / AF2122/97).